The following is a 550-amino-acid chain: Zorya protein ZorA (550 aa).

3 helical membrane-spanning segments follow: residues 16 to 36 (TLIT…AWWC), 52 to 72 (LMGA…LLNF), and 92 to 112 (FITS…DAFF).

It belongs to the MotA family.

The protein localises to the cell inner membrane. In terms of biological role, component of antiviral defense system Zorya type II, composed of ZorA, ZorB and ZorE. Expression of Zorya type II in E.coli (strain MG1655) confers resistance to phages SECphi7 and T7. While most T7 infected Zorya-containing cells undergo abortive infection, a minority produce viable phage progeny. These eventually accumulate to a high multiplicity of infection, leading to culture collapse by 170 minutes after initial infection. ZorA and ZorB probably assemble in the cell inner membrane and exert their effect there. This is Zorya protein ZorA from Escherichia coli (strain ATCC 8739 / DSM 1576 / NBRC 3972 / NCIMB 8545 / WDCM 00012 / Crooks).